A 396-amino-acid chain; its full sequence is 8-amino-7-oxononanoate synthase (396 aa).

R19 serves as a coordination point for substrate. 106-107 serves as a coordination point for pyridoxal 5'-phosphate; sequence GY. H131 contributes to the substrate binding site. S176, H204, and T233 together coordinate pyridoxal 5'-phosphate. K236 is modified (N6-(pyridoxal phosphate)lysine). T350 lines the substrate pocket.

This sequence belongs to the class-II pyridoxal-phosphate-dependent aminotransferase family. BioF subfamily. In terms of assembly, homodimer. It depends on pyridoxal 5'-phosphate as a cofactor.

It catalyses the reaction 6-carboxyhexanoyl-[ACP] + L-alanine + H(+) = (8S)-8-amino-7-oxononanoate + holo-[ACP] + CO2. It functions in the pathway cofactor biosynthesis; biotin biosynthesis. Functionally, catalyzes the decarboxylative condensation of pimeloyl-[acyl-carrier protein] and L-alanine to produce 8-amino-7-oxononanoate (AON), [acyl-carrier protein], and carbon dioxide. This chain is 8-amino-7-oxononanoate synthase, found in Pseudomonas syringae pv. syringae (strain B728a).